A 264-amino-acid polypeptide reads, in one-letter code: Indole-3-glycerol phosphate synthase (264 aa).

This sequence belongs to the TrpC family.

It carries out the reaction 1-(2-carboxyphenylamino)-1-deoxy-D-ribulose 5-phosphate + H(+) = (1S,2R)-1-C-(indol-3-yl)glycerol 3-phosphate + CO2 + H2O. Its pathway is amino-acid biosynthesis; L-tryptophan biosynthesis; L-tryptophan from chorismate: step 4/5. The chain is Indole-3-glycerol phosphate synthase from Stenotrophomonas maltophilia (strain R551-3).